The primary structure comprises 190 residues: Large ribosomal subunit protein uL10 (190 aa).

A disordered region spans residues 170 to 190 (AAGAPAEAAPVEAPAAETVDA).

The protein belongs to the universal ribosomal protein uL10 family. In terms of assembly, part of the ribosomal stalk of the 50S ribosomal subunit. The N-terminus interacts with L11 and the large rRNA to form the base of the stalk. The C-terminus forms an elongated spine to which L12 dimers bind in a sequential fashion forming a multimeric L10(L12)X complex.

Functionally, forms part of the ribosomal stalk, playing a central role in the interaction of the ribosome with GTP-bound translation factors. This chain is Large ribosomal subunit protein uL10, found in Kineococcus radiotolerans (strain ATCC BAA-149 / DSM 14245 / SRS30216).